A 545-amino-acid polypeptide reads, in one-letter code: MAGQGSQMKKYCDCCKRYVDHSNGKMKCFHRQMSANFEHSMIIPNKFLDQFGGKISRTVELESPKGNVYVVKVSKHMNKTVLQCGWEAFVDAHQIEENDSLLFRHIKNSRRASGVQERNADPIDVSSSTHDDTVQSSGGERFARSESGSDSQHSKTAKLAATCSSGGSECTGEEAKESSSSEHESSYDLVDPQIAPMPGYVLSRGTNLSQAHEEKLDMLVQEIRPEIPLYVTTMKHSNVNSHHASLVIAKHYACAYFPHTSQTITLKWHGKNRKWHPKFYIRKDQVGYILHGRWIDFVRHNHVKEGDICIFHLKNFNGRKFRATVHLLRETIPHSFGALHIPKRFESRNGRMRLKMTDDRRVSSTECRRGTMEPSTTNVKKEADNEQCNNGQGKRQEPLNFDVSVGSSKPYLTADRVSLTEEQFMKVEENVHSIQSEGPIYVSIMNKSNVGTDGLYIITLGRQFAIRYLPEGEQTLTLLTTGTGKAWQVKMRPRSGDARMFTLGWRDFVRDNRLQTEDICLFQLTKNSERGLAMKVHIIRHNERS.

Residues 26 to 119 (MKCFHRQMSA…RRASGVQERN (94 aa)) constitute a DNA-binding region (TF-B3 1). The disordered stretch occupies residues 111–188 (RASGVQERNA…SSSEHESSYD (78 aa)). The segment covering 173 to 186 (EEAKESSSSEHESS) has biased composition (basic and acidic residues). The segment at residues 231–331 (VTTMKHSNVN…RATVHLLRET (101 aa)) is a DNA-binding region (TF-B3 2). The disordered stretch occupies residues 368-400 (RRGTMEPSTTNVKKEADNEQCNNGQGKRQEPLN). Positions 441 to 542 (YVSIMNKSNV…AMKVHIIRHN (102 aa)) form a DNA-binding region, TF-B3 3.

The protein localises to the nucleus. This is B3 domain-containing protein Os03g0620500 from Oryza sativa subsp. japonica (Rice).